Consider the following 102-residue polypeptide: Co-chaperonin GroES (102 aa).

It belongs to the GroES chaperonin family. Heptamer of 7 subunits arranged in a ring. Interacts with the chaperonin GroEL.

It localises to the cytoplasm. Its function is as follows. Together with the chaperonin GroEL, plays an essential role in assisting protein folding. The GroEL-GroES system forms a nano-cage that allows encapsulation of the non-native substrate proteins and provides a physical environment optimized to promote and accelerate protein folding. GroES binds to the apical surface of the GroEL ring, thereby capping the opening of the GroEL channel. In Chlamydia muridarum (strain MoPn / Nigg), this protein is Co-chaperonin GroES.